The chain runs to 127 residues: Dual endothelin-1/VEGF signal peptide receptor (127 aa).

Over 1–65 (MNALYVTTVP…EMKSRWNWGS (65 aa)) the chain is Extracellular. A helical transmembrane segment spans residues 66–84 (ITCIICFTCVGSQLSMSSS). Residues 85-127 (KASNFSGPLQLYQRGIGHITNSYKRPQAPAWPCLSSGTMGRSH) lie on the Cytoplasmic side of the membrane.

In terms of tissue distribution, widely expressed with higher levels in kidney and aorta.

It is found in the cell membrane. Functionally, dual receptor for both endothelin-1 and the signal sequence of vascular endothelial growth factor A. Does not act as a receptor for angiotensin-2. Does not bind the VEGFA mature protein. May play a role in angiogenesis with a significant role in cardiovascular and neural development. The polypeptide is Dual endothelin-1/VEGF signal peptide receptor (Mus musculus (Mouse)).